The primary structure comprises 529 residues: Zinc finger protein 572 (529 aa).

The tract at residues 1 to 125 (MEQEQKLLVS…TGPAGQQNPS (125 aa)) is disordered. A Glycyl lysine isopeptide (Lys-Gly) (interchain with G-Cter in SUMO2) cross-link involves residue K6. Over residues 22–42 (KNTITGDESKNNLKTVQFSNS) the composition is skewed to polar residues. The span at 43 to 68 (KADKERASKWSRSDGPENYKDEDTKE) shows a compositional bias: basic and acidic residues. A compositionally biased stretch (polar residues) spans 87-96 (NDSNLGSQRN). 12 C2H2-type zinc fingers span residues 131-153 (YKCS…QRTH), 159-181 (YRCS…LRTH), 187-209 (YQCG…ERTH), 215-237 (YKCP…HRSH), 243-265 (YECP…QRTH), 271-293 (YKCP…QRTH), 299-321 (YKCP…QRIH), 327-349 (YQCI…QKMH), 383-405 (YKCC…QRTH), 411-433 (YRCS…QRTH), 439-461 (YKCP…RRTH), and 467-489 (YKCT…RKIH).

This sequence belongs to the krueppel C2H2-type zinc-finger protein family.

Its subcellular location is the nucleus. Functionally, may be involved in transcriptional regulation. The chain is Zinc finger protein 572 (ZNF572) from Bos taurus (Bovine).